The primary structure comprises 491 residues: D-xylose-proton symporter (491 aa).

Residues 1–9 lie on the Cytoplasmic side of the membrane; that stretch reads MNTQYNSSY. The helical transmembrane segment at 10 to 30 threads the bilayer; sequence IFSITLVATLGGLLFGYDTAV. The Periplasmic portion of the chain corresponds to 31-55; it reads ISGTVESLNTVFVAPQNLSESAANS. A helical membrane pass occupies residues 56 to 76; sequence LLGFCVASALIGCIIGGALGG. At 77–89 the chain is on the cytoplasmic side; sequence YCSNRFGRRDSLK. Residues 90–110 traverse the membrane as a helical segment; the sequence is IAAVLFFISGVGSAWPELGFT. Residues 111-133 lie on the Periplasmic side of the membrane; the sequence is SINPDNTVPVYLAGYVPEFVIYR. Residues 134-154 traverse the membrane as a helical segment; the sequence is IIGGIGVGLASMLSPMYIAEL. Residues 155–165 lie on the Cytoplasmic side of the membrane; sequence APAHIRGKLVS. The helical transmembrane segment at 166 to 186 threads the bilayer; it reads FNQFAIIFGQLLVYCVNYFIA. Beta-D-xylose is bound at residue Gln-168. Over 187 to 200 the chain is Periplasmic; it reads RSGDASWLNTDGWR. A helical transmembrane segment spans residues 201–221; that stretch reads YMFASECIPALLFLMLLYTVP. At 222 to 272 the chain is on the cytoplasmic side; the sequence is ESPRWLMSRGKQEQAEGILRKIMGNTLATQAVQEIKHSLDHGRKTGGRLLM. Residues 273–293 traverse the membrane as a helical segment; the sequence is FGVGVIVIGVMLSIFQQFVGI. Beta-D-xylose-binding positions include 288–289 and Asn-294; that span reads QQ. Residues 294–312 are Periplasmic-facing; the sequence is NVVLYYAPEVFKTLGASTD. A helical membrane pass occupies residues 313-333; the sequence is IALLQTIIVGVINLTFTVLAI. Residues 334 to 343 are Cytoplasmic-facing; it reads MTVDKFGRKP. Residues 344 to 364 traverse the membrane as a helical segment; it reads LQIIGALGMAIGMFSLGTAFY. Over 365-369 the chain is Periplasmic; the sequence is TQAPG. A helical transmembrane segment spans residues 370-390; that stretch reads IVALLSMLFYVAAFAMSWGPV. Topologically, residues 391 to 407 are cytoplasmic; it reads CWVLLSEIFPNAIRGKA. Beta-D-xylose contacts are provided by Trp-392 and Gln-415. The helical transmembrane segment at 408–428 threads the bilayer; the sequence is LAIAVAAQWLANYFVSWTFPM. The Periplasmic portion of the chain corresponds to 429–442; it reads MDKNSWLVAHFHNG. A helical transmembrane segment spans residues 443-463; that stretch reads FSYWIYGCMGVLAALFMWKFV. Over 464-491 the chain is Cytoplasmic; that stretch reads PETKGKTLEELEALWEPETKKTQQTATL.

It belongs to the major facilitator superfamily. Sugar transporter (TC 2.A.1.1) family.

It is found in the cell inner membrane. It catalyses the reaction D-xylose(in) + H(+)(in) = D-xylose(out) + H(+)(out). Its function is as follows. Uptake of D-xylose across the boundary membrane with the concomitant transport of protons into the cell (symport system). This chain is D-xylose-proton symporter (xylE), found in Escherichia coli O157:H7.